The following is a 389-amino-acid chain: MGQNLSTSNPLGFFPDHQLDPAFRANTANPDWDFNPNKDTWPDANKVGAGAFGLGFTPPHGGLLGWSPQAQGILQTLPANPPPASTNRQSGRQPTPLSPPLRNTHPQAMQWNSTTFHQTLQDPRVRGLYFPAGGSSSGTVNPVLTTASPLSSIFSRIGDPALNMENITSGFLGPLLVLQAGFFLLTRILTIPQSLDSWWTSLNFLGGTTVCLGQNSQSPTSNHSPTSCPPTCPGYRWMCLRRFIIFLFILLLCLIFLLVLLDYQGMLPVCPLIPGSSTTSTGPCRTCMTTAQGTSMYPSCCCTKPSDGNCTCIPIPSSWAFGKFLWEWASARFSWLSLLVPFVQWFVGLSPTVWLSVIWMMWYWGPSLYSILSPFLPLLPIFFCLWVYI.

M1 carries the N-acetylmethionine modification. G2 carries N-myristoyl glycine; by host lipidation. Residues 2–108 form a pre-S1 region; it reads GQNLSTSNPL…PPLRNTHPQA (107 aa). The interval 2–163 is pre-S; it reads GQNLSTSNPL…FSRIGDPALN (162 aa). The Virion surface; in external conformation portion of the chain corresponds to 2–170; it reads GQNLSTSNPL…ALNMENITSG (169 aa). The Intravirion; in internal conformation segment spans residues 2–242; it reads GQNLSTSNPL…PGYRWMCLRR (241 aa). O-linked (GalNAc...) threonine glycosylation is present at N37. Residues 76–103 are disordered; sequence TLPANPPPASTNRQSGRQPTPLSPPLRN. Over residues 85–95 the composition is skewed to polar residues; sequence STNRQSGRQPT. The pre-S2 stretch occupies residues 109–163; it reads MQWNSTTFHQTLQDPRVRGLYFPAGGSSSGTVNPVLTTASPLSSIFSRIGDPALN. The helical transmembrane segment at 171-191 threads the bilayer; that stretch reads FLGPLLVLQAGFFLLTRILTI. Topologically, residues 192–242 are intravirion; in external conformation; sequence PQSLDSWWTSLNFLGGTTVCLGQNSQSPTSNHSPTSCPPTCPGYRWMCLRR. Residues 243–263 form a helical membrane-spanning segment; it reads FIIFLFILLLCLIFLLVLLDY. The Virion surface portion of the chain corresponds to 264-337; that stretch reads QGMLPVCPLI…WASARFSWLS (74 aa). N309 carries N-linked (GlcNAc...) asparagine; by host glycosylation. Residues 338–358 traverse the membrane as a helical segment; that stretch reads LLVPFVQWFVGLSPTVWLSVI. Topologically, residues 359–364 are intravirion; it reads WMMWYW. Residues 365–387 form a helical membrane-spanning segment; the sequence is GPSLYSILSPFLPLLPIFFCLWV. Residues 388–389 lie on the Virion surface side of the membrane; it reads YI.

This sequence belongs to the orthohepadnavirus major surface antigen family. In its internal form (Li-HBsAg), interacts with the capsid protein and with the isoform S. Interacts with host chaperone CANX. In terms of assembly, associates with host chaperone CANX through its pre-S2 N glycan; this association may be essential for isoform M proper secretion. As to quaternary structure, interacts with isoform L. Interacts with the antigens of satellite virus HDV (HDVAgs); this interaction is required for encapsidation of HDV genomic RNA. In terms of processing, isoform M is N-terminally acetylated by host at a ratio of 90%, and N-glycosylated by host at the pre-S2 region. Myristoylated.

Its subcellular location is the virion membrane. Functionally, the large envelope protein exists in two topological conformations, one which is termed 'external' or Le-HBsAg and the other 'internal' or Li-HBsAg. In its external conformation the protein attaches the virus to cell receptors and thereby initiating infection. This interaction determines the species specificity and liver tropism. This attachment induces virion internalization predominantly through caveolin-mediated endocytosis. The large envelope protein also assures fusion between virion membrane and endosomal membrane. In its internal conformation the protein plays a role in virion morphogenesis and mediates the contact with the nucleocapsid like a matrix protein. In terms of biological role, the middle envelope protein plays an important role in the budding of the virion. It is involved in the induction of budding in a nucleocapsid independent way. In this process the majority of envelope proteins bud to form subviral lipoprotein particles of 22 nm of diameter that do not contain a nucleocapsid. This chain is Large envelope protein, found in Homo sapiens (Human).